A 230-amino-acid chain; its full sequence is Sugar fermentation stimulation protein homolog (230 aa).

It belongs to the SfsA family.

The sequence is that of Sugar fermentation stimulation protein homolog from Clostridium acetobutylicum (strain ATCC 824 / DSM 792 / JCM 1419 / IAM 19013 / LMG 5710 / NBRC 13948 / NRRL B-527 / VKM B-1787 / 2291 / W).